The chain runs to 274 residues: Acyl-[acyl-carrier-protein]--UDP-N-acetylglucosamine O-acyltransferase (274 aa).

The protein belongs to the transferase hexapeptide repeat family. LpxA subfamily. As to quaternary structure, homotrimer.

Its subcellular location is the cytoplasm. The catalysed reaction is a (3R)-hydroxyacyl-[ACP] + UDP-N-acetyl-alpha-D-glucosamine = a UDP-3-O-[(3R)-3-hydroxyacyl]-N-acetyl-alpha-D-glucosamine + holo-[ACP]. It functions in the pathway glycolipid biosynthesis; lipid IV(A) biosynthesis; lipid IV(A) from (3R)-3-hydroxytetradecanoyl-[acyl-carrier-protein] and UDP-N-acetyl-alpha-D-glucosamine: step 1/6. Functionally, involved in the biosynthesis of lipid A, a phosphorylated glycolipid that anchors the lipopolysaccharide to the outer membrane of the cell. This Bartonella bacilliformis (strain ATCC 35685 / KC583 / Herrer 020/F12,63) protein is Acyl-[acyl-carrier-protein]--UDP-N-acetylglucosamine O-acyltransferase.